A 554-amino-acid polypeptide reads, in one-letter code: MTTSTPDIQPAVQHTAQVAIAGAGPVGLMMANYLGQMGISVLLVEKLDTLIDYPRAIGIDDESLRAMQAVGLVNDVLPHTTPWHAMRFLTPKGRCFADIQPMTDEFGWSRRNAFIQPQVDAVMYHGLQRFPQVRCLFSREVEAFSQNGDGVTLNLKGPDGERETVRADWLVACDGGASFIRRTLNVPFEGKTAPNQWIVIDIANDPLATPHVYLCCDPVRPYVSAALPHGVRRFEFMVMPGETEAQLSEPHNMRRLLSKVLPDPDRVELIRQRVYTHNARLAERFRIDRVLLAGDAAHIMPVWQGQGYNSGMRDAFNLAWKLALVVNGKAGEALLDSYQQERRDHAKAMIDLSVTAGHVLAPPKRWQGAVRDGLSWLLNYLPPVKRYFLEMRFKPMPQYREGALLIDAAGKTSPVGKMFIQPQVTLESGESVLLDEVIGANFAIIGWGCNPQWGLDAGQIARWRAIGVRFIQVVPAVQIHREQDNAPGTLRVGDTQNRLKSWFAQHNTAIAVVRPDRFVAALAIPQTLGAQLTALAEKMTLATGDTARTEEKVA.

Residues 17 to 46 (QVAI…LVEK) and 285 to 295 (FRIDRVLLAGD) contribute to the FAD site.

This sequence belongs to the PheA/TfdB FAD monooxygenase family. The cofactor is FAD.

The catalysed reaction is 3-(3-hydroxyphenyl)propanoate + NADH + O2 + H(+) = 3-(2,3-dihydroxyphenyl)propanoate + NAD(+) + H2O. It catalyses the reaction (2E)-3-(3-hydroxyphenyl)prop-2-enoate + NADH + O2 + H(+) = (2E)-3-(2,3-dihydroxyphenyl)prop-2-enoate + NAD(+) + H2O. It functions in the pathway aromatic compound metabolism; 3-phenylpropanoate degradation. Catalyzes the insertion of one atom of molecular oxygen into position 2 of the phenyl ring of 3-(3-hydroxyphenyl)propionate (3-HPP) and hydroxycinnamic acid (3HCI). The polypeptide is 3-(3-hydroxy-phenyl)propionate/3-hydroxycinnamic acid hydroxylase (Klebsiella pneumoniae (strain 342)).